We begin with the raw amino-acid sequence, 458 residues long: E3 ubiquitin-protein ligase RNF25 (458 aa).

Residues 18-128 (SEVEVLESIY…EKGKEILTDN (111 aa)) enclose the RWD domain. Zn(2+) contacts are provided by C135, C138, C153, H155, C161, C197, and C200. The RING-type zinc finger occupies 135–201 (CVICLYGFQE…AVGVQCPVCR (67 aa)). Disordered regions lie at residues 267–299 (PPAPLEPESAIDVSRGSHQPSTLATKPSTTSAT) and 317–458 (KTPG…EDGS). Polar residues-rich tracts occupy residues 282-299 (GSHQPSTLATKPSTTSAT) and 362-372 (LKGTSDTQKLQ). Basic and acidic residues-rich tracts occupy residues 377-388 (PLKESMDLKPES) and 412-423 (RTRDCAHWERAK). Residues 432–443 (PRLPRGRGAYRP) show a composition bias toward low complexity.

The protein belongs to the RNF25 family. As to quaternary structure, interacts with UBE2D2, and may also interact with UBE2E1 and UBE2E3. Interacts with RELA/p65. In terms of processing, ubiquitinated; autoubiquitinated.

The protein localises to the cytoplasm. It carries out the reaction S-ubiquitinyl-[E2 ubiquitin-conjugating enzyme]-L-cysteine + [acceptor protein]-L-lysine = [E2 ubiquitin-conjugating enzyme]-L-cysteine + N(6)-ubiquitinyl-[acceptor protein]-L-lysine.. Its pathway is protein modification; protein ubiquitination. Functionally, E3 ubiquitin-protein ligase that plays a key role in the RNF14-RNF25 translation quality control pathway, a pathway that takes place when a ribosome has stalled during translation, and which promotes ubiquitination and degradation of translation factors on stalled ribosomes. Catalyzes ubiquitination of RPS27A in response to ribosome collisions, promoting activation of RNF14. RNF25 catalyzes ubiquitination of other ribosomal proteins on stalled ribosomes, such as RPL0, RPL1, RPL12, RPS13 and RPS17. Also involved in ubiquitination and degradation of stalled ETF1/eRF1. Independently of its function in the response to stalled ribosomes, mediates ubiquitination and subsequent proteasomal degradation of NKD2. May also stimulate transcription mediated by NF-kappa-B via its interaction with RELA/p65. In Bos taurus (Bovine), this protein is E3 ubiquitin-protein ligase RNF25 (RNF25).